Consider the following 719-residue polypeptide: Acyl-coenzyme A oxidase (719 aa).

Positions 716–719 (APKI) match the Microbody targeting signal motif.

Belongs to the acyl-CoA oxidase family. The cofactor is FAD.

It localises to the peroxisome. The enzyme catalyses a 2,3-saturated acyl-CoA + O2 = a (2E)-enoyl-CoA + H2O2. It participates in lipid metabolism; peroxisomal fatty acid beta-oxidation. The polypeptide is Acyl-coenzyme A oxidase (POX1) (Komagataella pastoris (Yeast)).